The sequence spans 191 residues: MGGSGSRLSKELLAEYQDLTFLTKQEILLAHRRFCELLPPEQRTVEESLHTRVSFEQILSLPELKANPFKERICMVFSTSPTRDSLSFEDFLDLLSVFSDTATPDIKSHYAFRIFDFDDDGTLDREDLSQLVNCLTGEGEDTRLSASEMKQLIDNILEESDIDRDGTINLSEFQHVISRSPDFASSFKIVL.

Gly2 carries N-myristoyl glycine lipidation. EF-hand domains lie at 103 to 138 and 148 to 183; these read TPDI…LTGE and EMKQ…SPDF. Residues Asp116, Asp118, Asp120, Thr122, Asp127, Asp161, Asp163, Asp165, Thr167, and Glu172 each contribute to the Ca(2+) site.

Monomer. Interacts with the heterodimeric integrin alpha-IIb/beta3 (ITGA2B-ITGB3). Interacts with ITGA2B (via cytoplasmic domain); the interaction is direct and calcium-dependent. Interacts with the protein kinases PLK2/SNK and PRKDC (via the region immediately upstream of the kinase domain). Interacts with PLK3; the interaction inhibits PLK3 kinase activity. Interacts with PSEN2. Interacts (via C-terminus) with F8. Interacts with NBR1 (via C-terminus). Interacts with FEZ1 (via C-terminus). Interacts with UBR5 (via C-terminus); the interaction is sensitive to DNA damage, and may target CIB1 for ubiquitin-mediated degradation. Interacts with IFI6; the interaction is direct. Interacts with BCL2. Interacts with TAS1R2 (via C-terminus); the interaction is independent of the myristoylation state of CIB1. Interacts with ITPR3; the interaction occurs in a calcium dependent manner. Interacts with PTK2/FAK1. Interacts with MAP3K5; the interaction inhibits MAP3K5 activation by phosphorylation, and its subsequent interaction with TRAF2. Interacts (via C-terminal region) with STMN2 (via the N-terminal region); the interaction is direct, occurs in a calcium-dependent manner and attenuates the STMN2-induced neurite outgrowth inhibition. Interacts with SPHK1, the interaction occurs in a calcium-dependent manner. Interacts with ITGA2B (via C-terminal cytoplasmic tail); the interaction occurs upon platelet aggregation and is stabilized/increased in a calcium and magnesium-dependent manner. Interacts with PAK1 (via N-terminal region); the interaction is direct and occurs in a calcium-dependent manner. Interacts with RAC3 (via C-terminal region); the interaction induces their association with the cytoskeleton upon alpha-IIb/beta3 integrin-mediated adhesion. Interacts with ITGA5 and ITGAV. Interacts with MYO1C. Interacts with ITGA2B (via C-terminal cytoplasmic tail region). Interacts (via C-terminal region) with PPP3R1 isoform 1 and isoform 2; the interactions increase upon cardiomyocytes hypertrophy. Interacts with CACNA1C; the interaction increases upon cardiomyocytes hypertrophy. Interacts and forms a complex with TMC6 and TMC8; the interaction stabilizes each component of the complex. As to expression, expressed strongly in Sertoli cells, weakly in pachytene spermatocytes, round spermatids and condensing spermatids (at protein level). Expressed in testis. Expressed in cardiac myocytes and endothelial cells. Expressed in heart, liver, spleen, lung, kidney, brain and inner ear. In the inner ear, expressed in the vestibule, basilar membrane and spiral ganglion cells.

It localises to the membrane. Its subcellular location is the cell membrane. The protein localises to the sarcolemma. The protein resides in the apical cell membrane. It is found in the cell projection. It localises to the ruffle membrane. Its subcellular location is the filopodium tip. The protein localises to the growth cone. The protein resides in the lamellipodium. It is found in the cytoplasm. It localises to the cytoskeleton. Its subcellular location is the microtubule organizing center. The protein localises to the centrosome. The protein resides in the perinuclear region. It is found in the nucleus. It localises to the neuron projection. Its subcellular location is the perikaryon. Its function is as follows. Calcium-binding protein that plays a role in the regulation of numerous cellular processes, such as cell differentiation, cell division, cell proliferation, cell migration, thrombosis, angiogenesis, cardiac hypertrophy and apoptosis. Involved in bone marrow megakaryocyte differentiation by negatively regulating thrombopoietin-mediated signaling pathway. Participates in the endomitotic cell cycle of megakaryocyte, a form of mitosis in which both karyokinesis and cytokinesis are interrupted. Plays a role in integrin signaling by negatively regulating alpha-IIb/beta3 activation in thrombin-stimulated megakaryocytes preventing platelet aggregation. Up-regulates PTK2/FAK1 activity, and is also needed for the recruitment of PTK2/FAK1 to focal adhesions; it thus appears to play an important role in focal adhesion formation. Positively regulates cell migration on fibronectin in a CDC42-dependent manner, the effect being negatively regulated by PAK1. Functions as a negative regulator of stress activated MAP kinase (MAPK) signaling pathways. Down-regulates inositol 1,4,5-trisphosphate receptor-dependent calcium signaling. Involved in sphingosine kinase SPHK1 translocation to the plasma membrane in a N-myristoylation-dependent manner preventing TNF-alpha-induced apoptosis. Regulates serine/threonine-protein kinase PLK3 activity for proper completion of cell division progression. Plays a role in microtubule (MT) dynamics during neuronal development; disrupts the MT depolymerization activity of STMN2 attenuating NGF-induced neurite outgrowth and the MT reorganization at the edge of lamellipodia. Promotes cardiomyocyte hypertrophy via activation of the calcineurin/NFAT signaling pathway. Stimulates calcineurin PPP3R1 activity by mediating its anchoring to the sarcolemma. In ischemia-induced (pathological or adaptive) angiogenesis, stimulates endothelial cell proliferation, migration and microvessel formation by activating the PAK1 and ERK1/ERK2 signaling pathway. Also promotes cancer cell survival and proliferation. May regulate cell cycle and differentiation of spermatogenic germ cells, and/or differentiation of supporting Sertoli cells. Forms a complex with TMC6/EVER1 and TMC8/EVER2 in lymphocytes and keratynocytes where CIB1 stabilizes TMC6 and TMC8 levels and reciprocally. This Mus musculus (Mouse) protein is Calcium and integrin-binding protein 1 (Cib1).